Here is a 589-residue protein sequence, read N- to C-terminus: Arginine--tRNA ligase (589 aa).

The 'HIGH' region signature appears at 123-133; it reads ANVAKPMHVGH.

Belongs to the class-I aminoacyl-tRNA synthetase family. Monomer.

Its subcellular location is the cytoplasm. It carries out the reaction tRNA(Arg) + L-arginine + ATP = L-arginyl-tRNA(Arg) + AMP + diphosphate. The sequence is that of Arginine--tRNA ligase from Hyphomonas neptunium (strain ATCC 15444).